Reading from the N-terminus, the 457-residue chain is G-protein coupled receptor 135 (457 aa).

The disordered stretch occupies residues 1–26 (MEEQARPPGRPAASATLQGSAHPGGA). Residues 1-64 (MEEQARPPGR…EAAGSRGPAP (64 aa)) are Extracellular-facing. Asparagine 47 is a glycosylation site (N-linked (GlcNAc...) asparagine). The helical transmembrane segment at 65 to 85 (LLWHGAAVAAQALVLLLIFLL) threads the bilayer. Over 86–109 (SSLGNCAVMGVIVKHRQLRTVTNA) the chain is Cytoplasmic. Residues 110-130 (FILSLSLSDLLTALLCLPAAF) form a helical membrane-spanning segment. Over 131–156 (LDLFAPPGDSGPWRSFCAASRFFSSC) the chain is Extracellular. A helical transmembrane segment spans residues 157–177 (FGIVSTFSVALISLDRYCAIV). Residues 178-189 (RPPRDKLGRRRA) are Cytoplasmic-facing. A helical transmembrane segment spans residues 190–210 (LQLLAGAWLAALGFSLPWDLL). Over 211–235 (RAPREPPAPQSFHRCLYRTSPDPAQ) the chain is Extracellular. The helical transmembrane segment at 236–256 (LGVAYSVGLVVACYLLPFLLM) threads the bilayer. Residues 257-295 (CFCRYHICKTVRLSDVRVRPMTTYARVLRFFSEVRTATT) are Cytoplasmic-facing. The helical transmembrane segment at 296-316 (VLIMIIFVMCCWGPYCFLVLL) threads the bilayer. The Extracellular portion of the chain corresponds to 317-329 (AATRQGQATQAPS). Residues 330–350 (LLNVAAVWLTWANGAINPVIY) form a helical membrane-spanning segment. Residues 351 to 457 (AIRNPNISML…HNSETRDSSI (107 aa)) lie on the Cytoplasmic side of the membrane.

The protein belongs to the G-protein coupled receptor 1 family. Interacts with MTNR1B. Interacts with ARRB1 and ARRB2 in a spontaneous and agonist-independent manner; leading to the internalization of GPR135 in the endosomal compartment.

It localises to the cell membrane. The protein localises to the endosome membrane. Its function is as follows. Orphan receptor. Has spontaneous activity for beta-arrestin recruitment. Shows a reciprocal regulatory interaction with the melatonin receptor MTNR1B most likely through receptor heteromerization. This is G-protein coupled receptor 135 (Gpr135) from Mus musculus (Mouse).